A 469-amino-acid polypeptide reads, in one-letter code: tRNA(Ile)-lysidine synthase (469 aa).

26–31 (SGGPDS) lines the ATP pocket.

This sequence belongs to the tRNA(Ile)-lysidine synthase family.

The protein resides in the cytoplasm. It carries out the reaction cytidine(34) in tRNA(Ile2) + L-lysine + ATP = lysidine(34) in tRNA(Ile2) + AMP + diphosphate + H(+). Functionally, ligates lysine onto the cytidine present at position 34 of the AUA codon-specific tRNA(Ile) that contains the anticodon CAU, in an ATP-dependent manner. Cytidine is converted to lysidine, thus changing the amino acid specificity of the tRNA from methionine to isoleucine. The protein is tRNA(Ile)-lysidine synthase of Clostridium perfringens (strain ATCC 13124 / DSM 756 / JCM 1290 / NCIMB 6125 / NCTC 8237 / Type A).